A 1071-amino-acid polypeptide reads, in one-letter code: DNA-directed RNA polymerase subunit beta (1071 aa).

It belongs to the RNA polymerase beta chain family. As to quaternary structure, in plastids the minimal PEP RNA polymerase catalytic core is composed of four subunits: alpha, beta, beta', and beta''. When a (nuclear-encoded) sigma factor is associated with the core the holoenzyme is formed, which can initiate transcription.

The protein resides in the plastid. It localises to the chloroplast. The catalysed reaction is RNA(n) + a ribonucleoside 5'-triphosphate = RNA(n+1) + diphosphate. DNA-dependent RNA polymerase catalyzes the transcription of DNA into RNA using the four ribonucleoside triphosphates as substrates. This is DNA-directed RNA polymerase subunit beta from Panax ginseng (Korean ginseng).